Consider the following 846-residue polypeptide: MQGAGSRGAWIHSPSHCPGNGHGSPPAVAPQRRRLTRRPGYMRSTASPGIGFLSPAVGMPRPISAGLTGQEFYPSQSKARQCSLDLRSHCQDSLVGNPFLKGSLGPAVTSVGHLHPAQGSMRERMVHSGVHSGNDRRQSERLTGDSGCRQEFLSSDSSKSLASSLDVAWSKGSRGLKTVRPLVSPASNGPVDIPSLPGFQDTFTSNFSFIRLSLGAAGERGEAEGCLPSREAEPLHQSPQEMAAEGSGSDRPHGEPRHLWTFSLHAAPGLVDLAQGTRSNRQPECGMVSSSDAGFSSQDASPAGGRSDQDGGWADAHGWHALLREWEPMLQDYLLSNRRQLEVTSLILKLQKLQEKAVEDGDYDMAETLRQRLEDLEQEKGRLPWALPSQQPALRSFLGYLATQTHAALHGAPQRAGSDDPEAPLEGQRRTTAQDSLPGLAVTRRDWLMREKEQLQKEIEALRARVSVLEAKEQRLSQELEDQEMLLRWQGCDQMALVAQLSPGQLQEVSKALGETLTSARWAPFRVEPPETLRSLRERTKSLDLAVRELTEQVCSGEKLCSSLRKRLADLDTRLPALLEAKMLALSGSCFSTAKELAEEIWAVSSEREGLEMFLGRLLALSSRNTRRLGSVKEDYLRCRQDLALQEAAHKTRVKANTVKCTEVLEGQLSCCRCPLLERVWKADLEACQLLMQSLEIQEAGSSSHVEDEKQVHSTGEAAQTAALAVPRTPHPEEEKSPLQVLCEWNTYSASLPHCAAGLWKEESHVVFAEVGDKCEAIGMRLLHLEDQLLGAMHGHDEALFQSLQGELQMVKETLQTMFLQLQPAKEAGGEASASYSTAGAQEAED.

Disordered stretches follow at residues 1–53, 127–147, 231–257, 277–312, and 409–436; these read MQGA…IGFL, HSGV…GDSG, EAEP…GEPR, TRSN…QDGG, and LHGA…AQDS. Positions 1 to 288 are interaction with MAP1A; it reads MQGAGSRGAW…SNRQPECGMV (288 aa). Composition is skewed to basic and acidic residues over residues 133–143 and 248–257; these read GNDRRQSERLT and GSDRPHGEPR. Polar residues predominate over residues 277-300; that stretch reads TRSNRQPECGMVSSSDAGFSSQDA. An interaction with TRAF3IP1 region spans residues 289–686; it reads SSSDAGFSSQ…LERVWKADLE (398 aa). A required for localization to punctate cytoplasmic foci region spans residues 429–587; the sequence is RRTTAQDSLP…LLEAKMLALS (159 aa). The necessary and sufficient for interaction with PCNT and localization at the centrosome stretch occupies residues 435–846; it reads DSLPGLAVTR…STAGAQEAED (412 aa). A coiled-coil region spans residues 440–489; that stretch reads LAVTRRDWLMREKEQLQKEIEALRARVSVLEAKEQRLSQELEDQEMLLRW. Residues 588–846 are interaction with ATF4 and ATF5; that stretch reads GSCFSTAKEL…STAGAQEAED (259 aa). Positions 721–846 are interaction with NDEL1 and PAFAH1B1; it reads TAALAVPRTP…STAGAQEAED (126 aa). The segment at 721–846 is interaction with PAFAH1B1; sequence TAALAVPRTP…STAGAQEAED (126 aa). Residues 795 to 828 form an interaction with NDEL1 region; the sequence is GHDEALFQSLQGELQMVKETLQTMFLQLQPAKEA.

In terms of assembly, interacts with NDEL1. Interacts with CCDC88A (via C-terminus); the interaction is direct. Interacts with GSK3B. Interacts with tubulin alpha, ACTN2, ANKHD1, ATF4, ATF5, CEP63, EIF3S3, MAP1A, NDEL1, PAFAH1B1, RANBP9, SPTBN4, SYNE1 and TRAF3IP1. Interaction with microtubules may be mediated in part by TRAF3IP1. Interacts (via C-terminal) with PCNT. Interacts with CHCHD6. Interacts with CCDC141. Interacts with FBXW7, the substrate-recognition component of a SCF (SKP1-CUL1-F-box protein) E3 ubiquitin-protein ligase complex; the interaction targets DISC1 for proteasomal degradation. Interacts with ZNF365. Interacts with ATF4; inhibiting ATF4 transcription factor activity by disrupting ATF4 dimerization and DNA-binding. Interacts with PDE4B. In terms of processing, ubiquitinated. Ubiquitination with 'Lys-48'-linked polyubiquitin chains leads to its proteasomal degradation. In terms of tissue distribution, expressed in brain, heart, kidney, liver and thymus. Within the brain expression is high in the cerebral cortex, hippocampus and olfactory bulb and is also seen at lower levels in the cerebellum (at protein level).

It is found in the cytoplasm. The protein localises to the cytoskeleton. It localises to the mitochondrion. Its subcellular location is the microtubule organizing center. The protein resides in the centrosome. It is found in the postsynaptic density. In terms of biological role, involved in the regulation of multiple aspects of embryonic and adult neurogenesis. Required for neural progenitor proliferation in the ventrical/subventrical zone during embryonic brain development and in the adult dentate gyrus of the hippocampus. Participates in the Wnt-mediated neural progenitor proliferation as a positive regulator by modulating GSK3B activity and CTNNB1 abundance. Plays a role as a modulator of the AKT-mTOR signaling pathway controlling the tempo of the process of newborn neurons integration during adult neurogenesis, including neuron positioning, dendritic development and synapse formation. Inhibits the activation of AKT-mTOR signaling upon interaction with CCDC88A. Regulates the migration of early-born granule cell precursors toward the dentate gyrus during the hippocampal development. Inhibits ATF4 transcription factor activity in neurons by disrupting ATF4 dimerization and DNA-binding. Plays a role, together with PCNT, in the microtubule network formation. This Rattus norvegicus (Rat) protein is Disrupted in schizophrenia 1 homolog.